The following is a 305-amino-acid chain: Delta-9 acyl-lipid desaturase 1 (305 aa).

Residues 1-20 (MSLSASEKEENNKKMAADKA) form a disordered region. Helical transmembrane passes span 39–59 (IVKAFASLFVHFLCLLAPFNF) and 60–80 (TWPALRVALIVYTVGGLGITV). The Fe cation site is built by His83, His88, His120, His123, and His124. The Histidine box-1 motif lies at 83 to 88 (HRNLAH). The Histidine box-2 signature appears at 120 to 124 (HRYHH). Residues 180-200 (VLYHILTFGFLLYYFGGLSFL) form a helical membrane-spanning segment. 4 residues coordinate Fe cation: His223, His252, His255, and His256. A Histidine box-3 motif is present at residues 252 to 256 (HNNHH). Residues 268–288 (WWQIDISWYIVRFLEIIGLAT) form a helical membrane-spanning segment.

The protein belongs to the fatty acid desaturase type 1 family. It depends on Fe cation as a cofactor. Strongly expressed in inflorescence meristems, leaves, and flowers, and weakly in roots and seedpods.

The protein resides in the endoplasmic reticulum membrane. It is found in the plastid. The protein localises to the chloroplast membrane. It functions in the pathway lipid metabolism; polyunsaturated fatty acid biosynthesis. Functionally, involved in delta-9 desaturation of fatty acids. Involved in the production of very-long-chain fatty acids (VLCFAs). May desaturate chloroplastic monogalactosyl diacylglycerol (MGDG) and alter chloroplast membrane fluidity, which is required to prime a cold acclimation response. This is Delta-9 acyl-lipid desaturase 1 from Arabidopsis thaliana (Mouse-ear cress).